A 118-amino-acid polypeptide reads, in one-letter code: Small ribosomal subunit protein uS13 (118 aa).

The disordered stretch occupies residues 97–118 (VRGQRTKTNARTCKGPRKAIKK).

This sequence belongs to the universal ribosomal protein uS13 family. As to quaternary structure, part of the 30S ribosomal subunit. Forms a loose heterodimer with protein S19. Forms two bridges to the 50S subunit in the 70S ribosome.

Functionally, located at the top of the head of the 30S subunit, it contacts several helices of the 16S rRNA. In the 70S ribosome it contacts the 23S rRNA (bridge B1a) and protein L5 of the 50S subunit (bridge B1b), connecting the 2 subunits; these bridges are implicated in subunit movement. Contacts the tRNAs in the A and P-sites. The chain is Small ribosomal subunit protein uS13 from Buchnera aphidicola subsp. Schizaphis graminum (strain Sg).